A 238-amino-acid polypeptide reads, in one-letter code: U2 small nuclear ribonucleoprotein A' (238 aa).

4 LRR repeats span residues 19–40, 42–63, 64–84, and 89–110; these read KQVT…GITK, TYEV…PRLK, NLKV…DKLP, and HLQS…RILC. The region spanning 123–161 is the LRRCT domain; sequence NPITDSPNYRYFIVWLIPTLKVLDFSKVKQKELVKAKEL.

This sequence belongs to the U2 small nuclear ribonucleoprotein A family. In terms of assembly, associated with the spliceosome.

The protein localises to the nucleus. In terms of biological role, involved in pre-mRNA splicing. In Debaryomyces hansenii (strain ATCC 36239 / CBS 767 / BCRC 21394 / JCM 1990 / NBRC 0083 / IGC 2968) (Yeast), this protein is U2 small nuclear ribonucleoprotein A' (LEA1).